The following is a 186-amino-acid chain: Small ribosomal subunit protein uS5 (186 aa).

One can recognise an S5 DRBM domain in the interval 20-83 (FVDKLVHINR…EAAKRDMIFV (64 aa)).

It belongs to the universal ribosomal protein uS5 family. Part of the 30S ribosomal subunit. Contacts proteins S4 and S8.

Its function is as follows. With S4 and S12 plays an important role in translational accuracy. Located at the back of the 30S subunit body where it stabilizes the conformation of the head with respect to the body. The chain is Small ribosomal subunit protein uS5 from Brucella abortus (strain S19).